Here is a 454-residue protein sequence, read N- to C-terminus: UDP-N-acetylmuramate--L-alanine ligase (454 aa).

ATP is bound at residue 109 to 115 (GTHGKTT).

This sequence belongs to the MurCDEF family.

It localises to the cytoplasm. The catalysed reaction is UDP-N-acetyl-alpha-D-muramate + L-alanine + ATP = UDP-N-acetyl-alpha-D-muramoyl-L-alanine + ADP + phosphate + H(+). It functions in the pathway cell wall biogenesis; peptidoglycan biosynthesis. Its function is as follows. Cell wall formation. The sequence is that of UDP-N-acetylmuramate--L-alanine ligase from Protochlamydia amoebophila (strain UWE25).